A 503-amino-acid polypeptide reads, in one-letter code: Maturase K (503 aa).

This sequence belongs to the intron maturase 2 family. MatK subfamily.

The protein resides in the plastid. Its subcellular location is the chloroplast. Functionally, usually encoded in the trnK tRNA gene intron. Probably assists in splicing its own and other chloroplast group II introns. In Actinodium cunninghamii (Albany daisy), this protein is Maturase K.